A 226-amino-acid chain; its full sequence is Small ribosomal subunit protein uS2c (226 aa).

Belongs to the universal ribosomal protein uS2 family.

The protein resides in the plastid. It is found in the chloroplast. The chain is Small ribosomal subunit protein uS2c (rps2) from Phaeodactylum tricornutum (strain CCAP 1055/1).